Reading from the N-terminus, the 650-residue chain is Sterol O-acyltransferase 2 (650 aa).

The segment at 41 to 79 (LTSSNNSCASEHEGEGEGEDERPATTSSAPTQNHSAGDV) is disordered. The segment covering 64–75 (ATTSSAPTQNHS) has biased composition (polar residues). 5 helical membrane-spanning segments follow: residues 223–243 (FSGLYVAFWMAIAFGAVKALI), 300–320 (TGWAFTSIYELLFVGFYMYLT), 412–432 (INVSNFFMFTMFPTLIYQIEY), 450–470 (IFGTIFLMMIDAQILMHPVAM), and 493–513 (LLVDIVPGFIVMYILDFYLIW). The short motif at 531–537 (FYGDWWN) is the FYXDWWN motif element. A run of 2 helical transmembrane segments spans residues 575 to 595 (ATLMTFFLSSVVHELAMYVIF) and 630 to 650 (VIFWLGICMGPSVMCTLYLTF). Residue histidine 587 is part of the active site.

The protein belongs to the membrane-bound acyltransferase family. Sterol o-acyltransferase subfamily.

It is found in the endoplasmic reticulum membrane. Sterol O-acyltransferase that catalyzes the formation of stery esters. This chain is Sterol O-acyltransferase 2 (ARE2), found in Saccharomyces uvarum (strain ATCC 76518 / CBS 7001 / CLIB 283 / NBRC 10550 / MCYC 623 / NCYC 2669 / NRRL Y-11845) (Yeast).